An 880-amino-acid chain; its full sequence is Alanine--tRNA ligase (880 aa).

Histidine 568, histidine 572, cysteine 670, and histidine 674 together coordinate Zn(2+).

It belongs to the class-II aminoacyl-tRNA synthetase family. The cofactor is Zn(2+).

It is found in the cytoplasm. It carries out the reaction tRNA(Ala) + L-alanine + ATP = L-alanyl-tRNA(Ala) + AMP + diphosphate. In terms of biological role, catalyzes the attachment of alanine to tRNA(Ala) in a two-step reaction: alanine is first activated by ATP to form Ala-AMP and then transferred to the acceptor end of tRNA(Ala). Also edits incorrectly charged Ser-tRNA(Ala) and Gly-tRNA(Ala) via its editing domain. The protein is Alanine--tRNA ligase of Exiguobacterium sibiricum (strain DSM 17290 / CCUG 55495 / CIP 109462 / JCM 13490 / 255-15).